Reading from the N-terminus, the 798-residue chain is MIKKIITTCMGLNNGLALFGVGLIAIAILVTYPKLPSLDSLQHYKPKLPLTIYSSDGQVIGVYGEQRREFTKIDDFPKILKDAVIAAEDKRFYDHWGVDVWGVARAVIGNVMAGGVQSGASTITQQVAKNFYLSSERSFTRKFNEALLAYKIEQSLSKDKILELYFNQIYLGQRAYGFASAAQTYFNKNVNDLTLAEAAMLAGLPKAPSAYNPIVNPERAKLRQAYILNNMLEEGMITLQQRDQALKEELHYERFVQNIDQSALYVAEMARQELFEKYGEDAYTQGFKVYTTVDTAHQRVATEALRKVLRNFDRGSSYRGAENYIDLSKSDNVEETVSQYLSTLYTVDKMIPAVVLEASRKGVQIQLPSGRKVTLNNHALGFAARAVNNEKMGDDRIRRGSVIRVKGSGDTFTVVQEPLLQGALVSLDAKTGAVRALVGGYDYHSKTFNRATQAMRQPGSTFKPFIYSAALAKGMTASTMINDAPISLPGKGANGKAWNPKNSDGRYAGYITLRQALTASKNMVSIRILMSIGIGYAQQYIQRFGFKPSEIPASLSMALGAGETTPLRIAEGYSVFANGGYKVSAHVIDKIYDSQGRLRAQMQPLVAGENAPQAIDPRNAYIMYKIMQDVVRVGTARGAATLGRSDIAGKTGTTNDNKDAWFVGFNPNVVTAVYIGFDKPRSMGRAGYGGTIAVPVWVEYIGFALKGTSVKPMKAPEGVVTNGGEVYMRERMTTSSDLALDNSGIRPRPTQPARRAVPNENRRRAESNTAPAREESDETPVLPSNTGNNNRQQLDSLF.

Residues 1-9 (MIKKIITTC) lie on the Cytoplasmic side of the membrane. A helical; Signal-anchor for type II membrane protein transmembrane segment spans residues 10–30 (MGLNNGLALFGVGLIAIAILV). Topologically, residues 31–798 (TYPKLPSLDS…NNRQQLDSLF (768 aa)) are periplasmic. A transglycosylase region spans residues 50–218 (LTIYSSDGQV…SAYNPIVNPE (169 aa)). Residue glutamate 88 is the Proton donor; for transglycosylase activity of the active site. Positions 413–699 (TVVQEPLLQG…GTIAVPVWVE (287 aa)) are transpeptidase. The Acyl-ester intermediate; for transpeptidase activity role is filled by serine 460. The disordered stretch occupies residues 734 to 798 (TSSDLALDNS…NNRQQLDSLF (65 aa)). The span at 782–798 (LPSNTGNNNRQQLDSLF) shows a compositional bias: polar residues.

The protein in the N-terminal section; belongs to the glycosyltransferase 51 family. This sequence in the C-terminal section; belongs to the transpeptidase family.

The protein resides in the cell inner membrane. The enzyme catalyses [GlcNAc-(1-&gt;4)-Mur2Ac(oyl-L-Ala-gamma-D-Glu-L-Lys-D-Ala-D-Ala)](n)-di-trans,octa-cis-undecaprenyl diphosphate + beta-D-GlcNAc-(1-&gt;4)-Mur2Ac(oyl-L-Ala-gamma-D-Glu-L-Lys-D-Ala-D-Ala)-di-trans,octa-cis-undecaprenyl diphosphate = [GlcNAc-(1-&gt;4)-Mur2Ac(oyl-L-Ala-gamma-D-Glu-L-Lys-D-Ala-D-Ala)](n+1)-di-trans,octa-cis-undecaprenyl diphosphate + di-trans,octa-cis-undecaprenyl diphosphate + H(+). It carries out the reaction Preferential cleavage: (Ac)2-L-Lys-D-Ala-|-D-Ala. Also transpeptidation of peptidyl-alanyl moieties that are N-acyl substituents of D-alanine.. The protein operates within cell wall biogenesis; peptidoglycan biosynthesis. In terms of biological role, cell wall formation. Synthesis of cross-linked peptidoglycan from the lipid intermediates. The enzyme has a penicillin-insensitive transglycosylase N-terminal domain (formation of linear glycan strands) and a penicillin-sensitive transpeptidase C-terminal domain (cross-linking of the peptide subunits). This is Penicillin-binding protein 1A (mrcA) from Neisseria flavescens.